A 242-amino-acid chain; its full sequence is MNFEAASAPSQQPSPTPAPKTEEPKENGGSEQQADQPENSKKDDVVASGVKISEVKNNTATIEVTFSKFELADANKKDFVLEVIKKADTNPIQASDLKYDEASKTLSGKLSGLNSNVDYEISKLTLNGKEVKFNEEELLKSYVKNAKLFMTFNKENKKINVKLQNFDILNSLEENQPILTFDIEIKKDSSLQVVHKSLTKNQLSNLNGLEIDLKDKMNGNNANYDVKLTNAKLLNVNIETQK.

Over residues Met1–Gln11 the composition is skewed to low complexity. Residues Met1–Val45 form a disordered region.

It to U.parvum UU171.

This is an uncharacterized protein from Ureaplasma parvum serovar 3 (strain ATCC 700970).